The sequence spans 491 residues: Cysteine--tRNA ligase (491 aa).

Residue cysteine 31 coordinates Zn(2+). A 'HIGH' region motif is present at residues 33 to 43 (PTVYGDAHLGH). 3 residues coordinate Zn(2+): cysteine 226, histidine 251, and glutamate 255. The 'KMSKS' region signature appears at 283–287 (KMGKS). Lysine 286 serves as a coordination point for ATP.

This sequence belongs to the class-I aminoacyl-tRNA synthetase family. In terms of assembly, monomer. Zn(2+) serves as cofactor.

It localises to the cytoplasm. The enzyme catalyses tRNA(Cys) + L-cysteine + ATP = L-cysteinyl-tRNA(Cys) + AMP + diphosphate. In Bacteroides fragilis (strain ATCC 25285 / DSM 2151 / CCUG 4856 / JCM 11019 / LMG 10263 / NCTC 9343 / Onslow / VPI 2553 / EN-2), this protein is Cysteine--tRNA ligase.